The chain runs to 121 residues: Protein MGF 110-5L (121 aa).

Positions 1–20 (MLVIFLGILGLLANQVSSQL) are cleaved as a signal peptide. N-linked (GlcNAc...) asparagine; by host glycosylation is found at Asn-62 and Asn-116.

The protein belongs to the asfivirus MGF 110 family.

This chain is Protein MGF 110-5L, found in African swine fever virus (isolate Portugal/Lis 57/1957) (ASFV).